Consider the following 193-residue polypeptide: Urease accessory protein UreE (193 aa).

The segment at 138-193 (RGAYHSHGAHSHDQGHAAHDHGNEHKHDHGHDHVHGPGCDHDHDHDHGHHHDHKHD) is disordered. Over residues 147 to 193 (HSHDQGHAAHDHGNEHKHDHGHDHVHGPGCDHDHDHDHGHHHDHKHD) the composition is skewed to basic and acidic residues.

The protein belongs to the UreE family.

The protein localises to the cytoplasm. Involved in urease metallocenter assembly. Binds nickel. Probably functions as a nickel donor during metallocenter assembly. The protein is Urease accessory protein UreE of Rhizobium leguminosarum bv. trifolii (strain WSM2304).